A 425-amino-acid chain; its full sequence is Glucose-1-phosphate adenylyltransferase (425 aa).

Alpha-D-glucose 1-phosphate-binding positions include Tyr114, Gly179, 194-195 (EK), and Ser212.

This sequence belongs to the bacterial/plant glucose-1-phosphate adenylyltransferase family. As to quaternary structure, homotetramer.

The enzyme catalyses alpha-D-glucose 1-phosphate + ATP + H(+) = ADP-alpha-D-glucose + diphosphate. The protein operates within glycan biosynthesis; glycogen biosynthesis. Its function is as follows. Involved in the biosynthesis of ADP-glucose, a building block required for the elongation reactions to produce glycogen. Catalyzes the reaction between ATP and alpha-D-glucose 1-phosphate (G1P) to produce pyrophosphate and ADP-Glc. This Pectobacterium carotovorum subsp. carotovorum (strain PC1) protein is Glucose-1-phosphate adenylyltransferase.